A 5162-amino-acid polypeptide reads, in one-letter code: Linear gramicidin synthase subunit B (5162 aa).

4 consecutive Carrier domains span residues 963–1038, 2027–2101, 3541–3616, and 4601–4675; these read APRN…QALR, EPQS…VVLE, APRN…GAIG, and AATS…GQST. An O-(pantetheine 4'-phosphoryl)serine mark is found at S998, S2062, S3576, and S4636.

This sequence belongs to the ATP-dependent AMP-binding enzyme family. In terms of assembly, large multienzyme complex composed of 4 subunits; LgrA, LgrB, LgrC and LgrD. Requires pantetheine 4'-phosphate as cofactor.

Functionally, activates the 3rd to 6th amino acids (Ala, D-Leu, Ala and D-Val) in linear gramicidin and catalyzes the formation of the peptide bond between them. This enzyme is also responsible for the epimerization of the 4th (D-Leu) and the 6th (D-Val) amino acids. The sequence is that of Linear gramicidin synthase subunit B (lgrB) from Brevibacillus parabrevis.